The following is a 20-amino-acid chain: Pregnancy-associated glycoprotein 61C (20 aa).

Belongs to the peptidase A1 family. Post-translationally, N-glycosylated. Expressed in chorionic epithelium (trophectoderm).

The protein localises to the secreted. Its subcellular location is the extracellular space. The chain is Pregnancy-associated glycoprotein 61C from Bubalus bubalis (Domestic water buffalo).